A 331-amino-acid chain; its full sequence is Mitochondrial glycine transporter (331 aa).

Solcar repeat units follow at residues 19 to 103 (SRTT…LRQG), 132 to 216 (LSNW…LKRR), and 234 to 318 (SSSS…LILR). Helical transmembrane passes span 25–50 (FAAG…TRVQ), 78–104 (GTLP…RQGL), 138–163 (LATG…VRYE), 191–214 (GFGA…EQLK), 238–264 (INFV…KTRL), and 293–311 (GLGL…AWTV).

It belongs to the mitochondrial carrier (TC 2.A.29) family. SLC25A38 subfamily.

The protein resides in the mitochondrion inner membrane. It catalyses the reaction glycine(in) = glycine(out). In terms of biological role, mitochondrial glycine transporter that imports glycine into the mitochondrial matrix. Plays an important role in providing glycine for the first enzymatic step in heme biosynthesis, the condensation of glycine with succinyl-CoA to produce 5-aminolevulinate (ALA) in the mitochondrial matrix. The protein is Mitochondrial glycine transporter of Neosartorya fischeri (strain ATCC 1020 / DSM 3700 / CBS 544.65 / FGSC A1164 / JCM 1740 / NRRL 181 / WB 181) (Aspergillus fischerianus).